We begin with the raw amino-acid sequence, 657 residues long: DNA mismatch repair protein MutL (657 aa).

It belongs to the DNA mismatch repair MutL/HexB family.

Functionally, this protein is involved in the repair of mismatches in DNA. It is required for dam-dependent methyl-directed DNA mismatch repair. May act as a 'molecular matchmaker', a protein that promotes the formation of a stable complex between two or more DNA-binding proteins in an ATP-dependent manner without itself being part of a final effector complex. The polypeptide is DNA mismatch repair protein MutL (Streptococcus agalactiae serotype Ia (strain ATCC 27591 / A909 / CDC SS700)).